A 614-amino-acid polypeptide reads, in one-letter code: FAD-dependent monooxygenase terD (614 aa).

A signal peptide spans 1 to 23 (MSSKFDVVICGSGTAGLAAATWL). FAD contacts are provided by residues 6 to 35 (DVVI…ILES), glutamine 44, valine 137, and 239 to 241 (RVY). An N-linked (GlcNAc...) asparagine glycan is attached at asparagine 260. 2 residues coordinate FAD: tyrosine 282 and aspartate 303. N-linked (GlcNAc...) asparagine glycosylation occurs at asparagine 317. Serine 319 provides a ligand contact to FAD. Residue asparagine 602 is glycosylated (N-linked (GlcNAc...) asparagine).

Belongs to the PheA/TfdB FAD monooxygenase family. Requires FAD as cofactor.

It functions in the pathway secondary metabolite biosynthesis. FAD-dependent monooxygenase; part of the gene cluster that mediates the biosynthesis of terrein, a fungal metabolite with ecological, antimicrobial, antiproliferative, and antioxidative activities. The first step in the pathway is performed by the polyketide synthase terA that produces 4-hydroxy-6-methylpyranon (4-HMP), orsellinic acid (OA), and 2,3-dehydro-6-hydroxymellein (2,3-dehydro-6-HM) by condensing acetyl-CoA with two, three, or four malonyl-CoA units, respectively. 4-HMP and OA are not pathway intermediates, but are rather shunt or side products. 2,3-dehydro-6-HM is further converted to 6-hydroxymellein (6-HM) by the 6-hydroxymellein synthase terB. The monooxygenases terC and terD, the multicopper oxidase terE and the Kelch-like protein terF are then involved in the transformation of 6-HM to terrein. Even if they are co-regulated with the other terrein cluster genes, terH and terI seem to be dispensable for terrein production; whereas one or both of the 2 transporters terG and terJ are probably required for efficient secretion of metabolites. In Aspergillus terreus (strain NIH 2624 / FGSC A1156), this protein is FAD-dependent monooxygenase terD.